Consider the following 313-residue polypeptide: Fucose-specific lectin (313 aa).

A run of 6 repeats spans residues 5–57, 58–109, 110–162, 163–208, 209–260, and 261–304. Residues 5–304 form a 6 X approximate tandem repeats region; the sequence is FLYTSKIAAI…SGKGWSIGAV (300 aa). Arg25, Glu37, Arg78, Glu90, Trp98, Gln102, Arg132, Glu147, and Trp154 together coordinate beta-L-fucose. Alpha-L-fucose contacts are provided by Arg78 and Glu90. Gln102 serves as a coordination point for alpha-L-fucose. Positions 154, 180, and 192 each coordinate alpha-L-fucose. A beta-L-fucose-binding site is contributed by Trp200. Residue Gly204 coordinates alpha-L-fucose. Residues Arg227 and Glu239 each coordinate beta-L-fucose. Residue Trp246 participates in alpha-L-fucose binding. Trp299 provides a ligand contact to beta-L-fucose.

It belongs to the fungal fucose-specific lectin family. As to quaternary structure, forms homodimers. The two AAL monomers are associated via interactions between N-terminal and C-terminal peptides. Tyr-7 interacts via aromatic ring stacking with its counterpart on the other monomer, whereas Ser-284 interacts via hydrogen bonding with Asp-264 on the other monomer.

In terms of biological role, lectin that specifically binds to L-fucose. Has strongest preference for the alpha-1,6-fucosylated chain (core fucose) on glycoproteins among alpha-1,2-, alpha-1,3-, alpha-1,4-, and alpha-1,6-fucosylated chains. Might play a role in the differentiation of the fruiting body. Exhibits antifungal activity against Mucor racemosus and thus could act as an antifungal protein in natural ecosystems. The chain is Fucose-specific lectin from Aleuria aurantia (Orange peel mushroom).